A 404-amino-acid polypeptide reads, in one-letter code: MFKINENYLKLQGSYLFSTIGKKVRTYKEENPDKNVISLGIGDVTLPLAPSIISALHKATDEMAAKETFKGYSPDLGYEFLRSAIAKHDYEARGVQIALDEIFISDGAKSDSGNIGDIFAENNKIAVCDPVYPVYVDTNVMAGRTGEFNYTTGKWSNVIYMPCTKENKFVPSLPAETPDIIYLCFPNNPTGSAITKMKLQKWVDYAIEKGAVIIYDAAYEAYISEENCPHTIYECDGAKKCAIELRSFSKNAGFTGTRLGFTIVPKELTSDGVSLNSLWARRHGTKFNGAPYIIQTAGAAVYSPEGIAETREQINYYMNNARVIRDGLLEAGYQVSGGVNAPYIWLHTPDGMTSWEYFDYLLQNASVVGTPGSGFGPSGEGYFRLTAFGTYENTLEALRRIKNL.

The substrate site is built by Tyr-15 and Gly-42. Pyridoxal 5'-phosphate contacts are provided by residues Tyr-72, 108-109 (AK), Tyr-132, Asn-188, Tyr-219, and 247-249 (SFS). Substrate-binding residues include Lys-109, Tyr-132, and Asn-188. Lys-250 carries the post-translational modification N6-(pyridoxal phosphate)lysine. 2 residues coordinate pyridoxal 5'-phosphate: Arg-258 and Asn-288. Substrate is bound by residues Asn-288 and Arg-384.

This sequence belongs to the class-I pyridoxal-phosphate-dependent aminotransferase family. LL-diaminopimelate aminotransferase subfamily. As to quaternary structure, homodimer. Pyridoxal 5'-phosphate serves as cofactor.

It carries out the reaction (2S,6S)-2,6-diaminopimelate + 2-oxoglutarate = (S)-2,3,4,5-tetrahydrodipicolinate + L-glutamate + H2O + H(+). The protein operates within amino-acid biosynthesis; L-lysine biosynthesis via DAP pathway; LL-2,6-diaminopimelate from (S)-tetrahydrodipicolinate (aminotransferase route): step 1/1. Involved in the synthesis of meso-diaminopimelate (m-DAP or DL-DAP), required for both lysine and peptidoglycan biosynthesis. Catalyzes the direct conversion of tetrahydrodipicolinate to LL-diaminopimelate. The sequence is that of LL-diaminopimelate aminotransferase from Lachnoclostridium phytofermentans (strain ATCC 700394 / DSM 18823 / ISDg) (Clostridium phytofermentans).